The following is a 511-amino-acid chain: Cytochrome P450 26B1 (511 aa).

Residue Cys440 participates in heme binding.

It belongs to the cytochrome P450 family. Heme serves as cofactor.

It localises to the endoplasmic reticulum membrane. The protein resides in the microsome membrane. The enzyme catalyses all-trans-retinoate + reduced [NADPH--hemoprotein reductase] + O2 = all-trans-4-hydroxyretinoate + oxidized [NADPH--hemoprotein reductase] + H2O + H(+). It catalyses the reaction all-trans-retinoate + reduced [NADPH--hemoprotein reductase] + O2 = all-trans-18-hydroxyretinoate + oxidized [NADPH--hemoprotein reductase] + H2O + H(+). Functionally, a cytochrome P450 monooxygenase involved in the metabolism of retinoates (RAs), the active metabolites of vitamin A, and critical signaling molecules in animals. RAs exist as at least four different isomers: all-trans-RA (atRA), 9-cis-RA, 13-cis-RA, and 9,13-dicis-RA, where atRA is considered to be the biologically active isomer, although 9-cis-RA and 13-cis-RA also have activity. Catalyzes the hydroxylation of atRA primarily at C-4 and C-18, thereby contributing to the regulation of atRA homeostasis and signaling. Hydroxylation of atRA limits its biological activity and initiates a degradative process leading to its eventual elimination. Involved in the convertion of atRA to all-trans-4-oxo-RA. Can oxidize all-trans-13,14-dihydroretinoate (DRA) to metabolites which could include all-trans-4-oxo-DRA, all-trans-4-hydroxy-DRA, all-trans-5,8-epoxy-DRA, and all-trans-18-hydroxy-DRA. Plays a role in skeletal development, both at the level of patterning and in the ossification of bone and the establishment of some synovial joints. The protein is Cytochrome P450 26B1 of Danio rerio (Zebrafish).